We begin with the raw amino-acid sequence, 622 residues long: Probable ATP-citrate synthase (622 aa).

Residues 228–248 (ALRY…ELGG) and 279–305 (FPTE…KNKA) each bind ATP. E245 contacts Mg(2+). H287 (tele-phosphohistidine intermediate) is an active-site residue. A CoA-binding site is contributed by 306 to 316 (LREAGAVVPTS).

It in the N-terminal section; belongs to the succinate/malate CoA ligase beta subunit family. In the C-terminal section; belongs to the succinate/malate CoA ligase alpha subunit family. Homotetramer.

The protein localises to the cytoplasm. The enzyme catalyses oxaloacetate + acetyl-CoA + ADP + phosphate = citrate + ATP + CoA. Its function is as follows. Catalyzes the cleavage of citrate into oxaloacetate and acetyl-CoA, the latter serving as common substrate in multiple biochemical reactions in protein, carbohydrate and lipid metabolism. In Dictyostelium discoideum (Social amoeba), this protein is Probable ATP-citrate synthase (acly).